We begin with the raw amino-acid sequence, 170 residues long: Non-specific lipid transfer protein GPI-anchored 5 (170 aa).

The first 24 residues, 1–24 (MKMEMGLVFLTVFMAVMSSTMVSA), serve as a signal peptide directing secretion. 4 cysteine pairs are disulfide-bonded: C28-C69, C38-C53, C54-C95, and C67-C105. N-linked (GlcNAc...) asparagine glycosylation is found at N45, N84, N124, and N130. A disordered region spans residues 105–148 (CNTGGGGGGSTSDSPAESPNSSGPGNGSKTVPVGEGDGPPSSDG). The GPI-anchor amidated serine moiety is linked to residue S146. Residues 147–170 (DGSSIKFSFPLIAFFSAVSYMAIF) constitute a propeptide, removed in mature form.

This sequence belongs to the plant LTP family. As to expression, expressed in seedlings, preferentially in the endodermis of hypocotyls and roots, as well as in anthers, sepals and flower tori.

It localises to the cell membrane. Its function is as follows. Lipid transfer protein involved in seed and ovule maturation and development, probably by regulating the fatty acids homeostasis during suberin and sporopollenin biosynthesis or deposition. Contributes to pre-invasive defense against some non-host powdery mildew pathogens by preventing the penetration of the epidermal cell wall by the fungal agents (e.g. Blumeria graminis f. sp. hordei (Bgh)). The protein is Non-specific lipid transfer protein GPI-anchored 5 of Arabidopsis thaliana (Mouse-ear cress).